A 189-amino-acid chain; its full sequence is Protein GrpE (189 aa).

Positions 1 to 31 are disordered; that stretch reads MSKKHMKGNGGEVPENSEMSGSEELVAVEPG.

This sequence belongs to the GrpE family. Homodimer.

The protein localises to the cytoplasm. In terms of biological role, participates actively in the response to hyperosmotic and heat shock by preventing the aggregation of stress-denatured proteins, in association with DnaK and GrpE. It is the nucleotide exchange factor for DnaK and may function as a thermosensor. Unfolded proteins bind initially to DnaJ; upon interaction with the DnaJ-bound protein, DnaK hydrolyzes its bound ATP, resulting in the formation of a stable complex. GrpE releases ADP from DnaK; ATP binding to DnaK triggers the release of the substrate protein, thus completing the reaction cycle. Several rounds of ATP-dependent interactions between DnaJ, DnaK and GrpE are required for fully efficient folding. The chain is Protein GrpE from Syntrophobacter fumaroxidans (strain DSM 10017 / MPOB).